Here is a 352-residue protein sequence, read N- to C-terminus: MSILAEKLSSILKRYDELTALLSSAEVISDIKKLTELSKEQSSIEEISIASKEYLSVLEDIKENKELLEDKELSELAKEELKILETKKSDLETAIKQLLIPKDPNDDKNIYLELRAGTGGDEAGIFVGDLFKAYCRYADLKKWKVEIVSSSENSVGGYKEIIALIKGKGVYSRLKFEAGTHRVQRVPETESQGRIHTSAITVAIMPEVDDVEVSINPSDLKIEVFRAGGHGGQCVNTTDSAVRITHLPTNISVSMQDEKSQHKNKDKALKILKARLYEKQIEEQQLANAKDRKEQVGSGDRSERIRTYNYPQNRLSEHRINLTLYSLEEIMLSGNLDEVINPLIAHAQSQFE.

Gln233 carries the post-translational modification N5-methylglutamine. The interval 288–309 (NAKDRKEQVGSGDRSERIRTYN) is disordered. Positions 289–306 (AKDRKEQVGSGDRSERIR) are enriched in basic and acidic residues.

This sequence belongs to the prokaryotic/mitochondrial release factor family. Post-translationally, methylated by PrmC. Methylation increases the termination efficiency of RF1.

Its subcellular location is the cytoplasm. Peptide chain release factor 1 directs the termination of translation in response to the peptide chain termination codons UAG and UAA. In Helicobacter pylori (strain G27), this protein is Peptide chain release factor 1.